The primary structure comprises 123 residues: Galanin peptides (123 aa).

The signal sequence occupies residues 1–19 (MPRGCALLLASLLLASALS). The propeptide occupies 20-30 (ATLGLGSPVKE). Alanine amide is present on Ala61. Phosphoserine occurs at positions 116 and 117.

It belongs to the galanin family.

The protein localises to the secreted. Functionally, endocrine hormone of the central and peripheral nervous systems that binds and activates the G protein-coupled receptors GALR1, GALR2, and GALR3. This small neuropeptide may regulate diverse physiologic functions including contraction of smooth muscle of the gastrointestinal and genitourinary tract, growth hormone and insulin release and adrenal secretion. The protein is Galanin peptides (GAL) of Sus scrofa (Pig).